The chain runs to 144 residues: Large ribosomal subunit protein uL15 (144 aa).

The disordered stretch occupies residues 1–53; the sequence is MRLNTLSPAEGAKHAPKRLGRGIGSGLGKTGGRGHKGQNSRSGGGVRRGFEGG. The span at 21 to 31 shows a compositional bias: gly residues; it reads RGIGSGLGKTG.

Belongs to the universal ribosomal protein uL15 family. Part of the 50S ribosomal subunit.

Functionally, binds to the 23S rRNA. This Pectobacterium atrosepticum (strain SCRI 1043 / ATCC BAA-672) (Erwinia carotovora subsp. atroseptica) protein is Large ribosomal subunit protein uL15.